Reading from the N-terminus, the 1249-residue chain is Protein transport protein Sec31A (1249 aa).

WD repeat units follow at residues 4 to 47 (KEID…EIFE), 64 to 111 (SSSH…AGDK), 120 to 160 (KHTG…TPMT), 166 to 206 (QPPE…PIIK), 209 to 254 (DHSN…SPLR), 258 to 298 (NHAR…VLYE), and 301 to 342 (TNTQ…DGLR). The tract at residues 161–470 (PGAKTQPPED…IDASQTDFEK (310 aa)) is interaction with SEC13. Residues 397 to 429 (SFSFGGKLVTFENVTGQPQQGAEQPRRQPVFIS) form a WD 8; interaction with SEC13 repeat. Position 423 is an asymmetric dimethylarginine (Arg-423). 2 positions are modified to phosphoserine: Ser-526 and Ser-531. Lys-647 participates in a covalent cross-link: Glycyl lysine isopeptide (Lys-Gly) (interchain with G-Cter in ubiquitin). Disordered stretches follow at residues 790–829 (QGRS…VQSQ), 842–940 (TTWS…RYPN), and 954–1123 (PHMY…PIGN). The segment covering 796–805 (GQESSRSSYE) has biased composition (polar residues). A Phosphoserine modification is found at Ser-799. Residues 800 to 1142 (SRSSYEGQPL…TEKITKKPIP (343 aa)) are interaction with PDCD6. Positions 873 to 879 (GFIMHGN) match the ALG-2-binding site motif-2 (ABS-2) motif. Positions 898-908 (QPPPYPQPQPY) are enriched in pro residues. Low complexity-rich tracts occupy residues 961–970 (PASSPTSSSA) and 991–1007 (PSSS…GTPP). A compositionally biased stretch (polar residues) spans 1013 to 1024 (PASQRTGPQNGW). Low complexity predominate over residues 1056 to 1074 (PGGDPQPQGLQQQPSASGP). At Thr-1190 the chain carries Phosphothreonine. Ser-1192 carries the post-translational modification Phosphoserine. Lys-1246 is covalently cross-linked (Glycyl lysine isopeptide (Lys-Gly) (interchain with G-Cter in ubiquitin)).

The protein belongs to the WD repeat SEC31 family. COPII is composed of at least 5 proteins: the SEC23/24 complex, the SEC13/31 complex and SAR1. SEC13 and SEC31 make a 2:2 tetramer that forms the edge element of the COPII outer coat. The tetramer self-assembles in multiple copies to form the complete polyhedral cage. Interacts (via WD 8) with SEC13. Interacts with PDCD6; interaction takes place in response to cytosolic calcium increase and leads to bridge together the BCR(KLHL12) complex and SEC31A, leading to monoubiquitination. Interacts with KLHL12. In terms of processing, monoubiquitinated by the BCR(KLHL12) E3 ubiquitin ligase complex, leading to regulate the size of COPII coats. Ubiquitously expressed.

It is found in the cytoplasm. Its subcellular location is the cytoplasmic vesicle. It localises to the COPII-coated vesicle membrane. The protein localises to the endoplasmic reticulum membrane. Its function is as follows. Component of the coat protein complex II (COPII) which promotes the formation of transport vesicles from the endoplasmic reticulum (ER). The coat has two main functions, the physical deformation of the endoplasmic reticulum membrane into vesicles and the selection of cargo molecules. This Rattus norvegicus (Rat) protein is Protein transport protein Sec31A (Sec31a).